The sequence spans 353 residues: Mitochondrial glutathione transporter SLC25A40 (353 aa).

Solcar repeat units follow at residues 14–132, 140–224, and 234–328; these read ITPF…LFAL, RSDL…GKWW, and PTVA…GKAF. 6 helical membrane-spanning segments follow: residues 20–40, 104–124, 143–163, 200–221, 237–257, and 299–319; these read MMAS…LDVV, LWSG…IYFT, LAPL…ISPL, WGPT…YEKG, AITF…TLPF, and GLFA…AIMI.

Belongs to the mitochondrial carrier (TC 2.A.29) family.

It is found in the mitochondrion inner membrane. The catalysed reaction is glutathione(in) = glutathione(out). Its function is as follows. Probable mitochondrial transporter required for glutathione import into mitochondria. Glutathione, which plays key roles in oxidative metabolism, is produced exclusively in the cytosol and is imported in many organelles. Mitochondrial glutathione is required for the activity and stability of proteins containing iron-sulfur clusters. The protein is Mitochondrial glutathione transporter SLC25A40 of Danio rerio (Zebrafish).